Here is a 105-residue protein sequence, read N- to C-terminus: Thiosulfate sulfurtransferase GlpE (105 aa).

Residues 15–103 (MQQGAILVDI…WCRAELPIDT (89 aa)) enclose the Rhodanese domain. C63 serves as the catalytic Cysteine persulfide intermediate.

Belongs to the GlpE family.

Its subcellular location is the cytoplasm. It catalyses the reaction thiosulfate + hydrogen cyanide = thiocyanate + sulfite + 2 H(+). It carries out the reaction thiosulfate + [thioredoxin]-dithiol = [thioredoxin]-disulfide + hydrogen sulfide + sulfite + 2 H(+). In terms of biological role, transferase that catalyzes the transfer of sulfur from thiosulfate to thiophilic acceptors such as cyanide or dithiols. May function in a CysM-independent thiosulfate assimilation pathway by catalyzing the conversion of thiosulfate to sulfite, which can then be used for L-cysteine biosynthesis. This is Thiosulfate sulfurtransferase GlpE from Haemophilus influenzae (strain ATCC 51907 / DSM 11121 / KW20 / Rd).